A 133-amino-acid chain; its full sequence is Large ribosomal subunit protein bL12 (133 aa).

The segment at aspartate 98–aspartate 118 is disordered.

Belongs to the bacterial ribosomal protein bL12 family. As to quaternary structure, homodimer. Part of the ribosomal stalk of the 50S ribosomal subunit. Forms a multimeric L10(L12)X complex, where L10 forms an elongated spine to which 2 to 4 L12 dimers bind in a sequential fashion. Binds GTP-bound translation factors.

In terms of biological role, forms part of the ribosomal stalk which helps the ribosome interact with GTP-bound translation factors. Is thus essential for accurate translation. The chain is Large ribosomal subunit protein bL12 from Crocosphaera subtropica (strain ATCC 51142 / BH68) (Cyanothece sp. (strain ATCC 51142)).